The chain runs to 387 residues: Patatin-05 (387 aa).

An N-terminal signal peptide occupies residues 1 to 23 (MATTKSVLVLIFMILATTSSTFA). The region spanning 32-230 (LSIDGGGIKG…TVADPALLSV (199 aa)) is the PNPLA domain. The short motif at 36 to 41 (GGGIKG) is the GXGXXG element. A GXSXG motif is present at residues 75-79 (GTSTG). Ser77 serves as the catalytic Nucleophile. 2 N-linked (GlcNAc...) asparagine glycosylation sites follow: Asn115 and Asn203. Asp216 functions as the Proton acceptor in the catalytic mechanism. Residues 216–218 (DGA) carry the DGA/G motif.

Belongs to the patatin family. In terms of tissue distribution, tuber.

Its subcellular location is the vacuole. Probable lipolytic acyl hydrolase (LAH), an activity which is thought to be involved in the response of tubers to pathogens. The chain is Patatin-05 (pat1-k1) from Solanum tuberosum (Potato).